A 112-amino-acid polypeptide reads, in one-letter code: Abdominal ganglion neuropeptides L5-67 (112 aa).

Residues 1 to 23 (MKTAVLLVCLAYVMAAILSLCAS) form the signal peptide. F33 is subject to Phenylalanine amide.

The prohormone is proteolytically cleaved in 2 steps, yielding first 2 products: luqin and PRMP. In the second step, PRMP is cleaved to yield luqin-B and luqin-C. Neurons L2-4 and L6, also called giant dorsal LUQ (Left Upper Quadrant) neurons of the abdominal ganglion. Also expressed in smaller neurons in the CNS and in peripheral organs such as the kidney.

It is found in the secreted. This chain is Abdominal ganglion neuropeptides L5-67, found in Aplysia californica (California sea hare).